The chain runs to 1190 residues: PAN2-PAN3 deadenylation complex catalytic subunit PAN2 (1190 aa).

6 WD repeats span residues 24–63 (TTIV…NSLY), 129–166 (NKFN…PNVL), 167–207 (SSFD…TMKT), 222–264 (GNYI…AIAP), 266–306 (PFPA…NVYL), and 322–361 (NNKP…KDFV). The tract at residues 364–511 (PQPVEQPDII…FQYKFQGKLN (148 aa)) is linker. Residues 512–924 (KVPNCYSRLQ…KPIVIMYQQT (413 aa)) form the USP domain. An Exonuclease domain is found at 988-1158 (VAIDAEFVML…EDANTALLLY (171 aa)). 4 residues coordinate a divalent metal cation: aspartate 991, glutamate 993, aspartate 1097, and aspartate 1150.

The protein belongs to the peptidase C19 family. PAN2 subfamily. As to quaternary structure, forms a heterotrimer with an asymmetric homodimer of the regulatory subunit PAN3 to form the poly(A)-nuclease (PAN) deadenylation complex. A divalent metal cation serves as cofactor.

The protein resides in the cytoplasm. It carries out the reaction Exonucleolytic cleavage of poly(A) to 5'-AMP.. Positively regulated by the regulatory subunit PAN3. Catalytic subunit of the poly(A)-nuclease (PAN) deadenylation complex, one of two cytoplasmic mRNA deadenylases involved in mRNA turnover. PAN specifically shortens poly(A) tails of RNA and the activity is stimulated by poly(A)-binding protein PAB1. PAN deadenylation is followed by rapid degradation of the shortened mRNA tails by the CCR4-NOT complex. Deadenylated mRNAs are then degraded by two alternative mechanisms, namely exosome-mediated 3'-5' exonucleolytic degradation, or deadenylation-dependent mRNA decaping and subsequent 5'-3' exonucleolytic degradation by XRN1. May also be involved in post-transcriptional maturation of mRNA poly(A) tails. In Candida albicans (strain SC5314 / ATCC MYA-2876) (Yeast), this protein is PAN2-PAN3 deadenylation complex catalytic subunit PAN2.